Here is a 252-residue protein sequence, read N- to C-terminus: Imidazole glycerol phosphate synthase subunit HisF (252 aa).

Residues aspartate 11 and aspartate 130 contribute to the active site.

This sequence belongs to the HisA/HisF family. In terms of assembly, heterodimer of HisH and HisF.

It localises to the cytoplasm. The catalysed reaction is 5-[(5-phospho-1-deoxy-D-ribulos-1-ylimino)methylamino]-1-(5-phospho-beta-D-ribosyl)imidazole-4-carboxamide + L-glutamine = D-erythro-1-(imidazol-4-yl)glycerol 3-phosphate + 5-amino-1-(5-phospho-beta-D-ribosyl)imidazole-4-carboxamide + L-glutamate + H(+). The protein operates within amino-acid biosynthesis; L-histidine biosynthesis; L-histidine from 5-phospho-alpha-D-ribose 1-diphosphate: step 5/9. IGPS catalyzes the conversion of PRFAR and glutamine to IGP, AICAR and glutamate. The HisF subunit catalyzes the cyclization activity that produces IGP and AICAR from PRFAR using the ammonia provided by the HisH subunit. The polypeptide is Imidazole glycerol phosphate synthase subunit HisF (Staphylococcus aureus (strain USA300)).